The following is a 245-amino-acid chain: 8-amino-3,8-dideoxy-manno-octulosonate cytidylyltransferase (245 aa).

This sequence belongs to the KdsB family.

It localises to the cytoplasm. It carries out the reaction 8-amino-3,8-dideoxy-alpha-D-manno-octulosonate + CTP = CMP-8-amino-3,8-dideoxy-alpha-D-manno-oct-2-ulosonate + diphosphate. The protein operates within bacterial outer membrane biogenesis; lipopolysaccharide biosynthesis. Functionally, activates KDO8N (a required 8-carbon sugar) for incorporation into bacterial lipopolysaccharide in the Shewanella genus. This is 8-amino-3,8-dideoxy-manno-octulosonate cytidylyltransferase from Shewanella sp. (strain MR-7).